Consider the following 135-residue polypeptide: Large ribosomal subunit protein uL16c (135 aa).

Position 1 is an N-methylmethionine (methionine 1).

As to quaternary structure, component of the chloroplast large ribosomal subunit (LSU). Mature 70S chloroplast ribosomes of higher plants consist of a small (30S) and a large (50S) subunit. The 30S small subunit contains 1 molecule of ribosomal RNA (16S rRNA) and 24 different proteins. The 50S large subunit contains 3 rRNA molecules (23S, 5S and 4.5S rRNA) and 33 different proteins. In terms of processing, partially alpha-N-monomethylated at Met-1 (10%), whereas 90% of it is blocked to Edman degradation, probably by trimethylation.

The protein localises to the plastid. It is found in the chloroplast. Its function is as follows. Component of the chloroplast ribosome (chloro-ribosome), a dedicated translation machinery responsible for the synthesis of chloroplast genome-encoded proteins, including proteins of the transcription and translation machinery and components of the photosynthetic apparatus. The protein is Large ribosomal subunit protein uL16c of Spinacia oleracea (Spinach).